Reading from the N-terminus, the 533-residue chain is MNDFWQHCSALLERELTPQQYVTWIKPLAPVAFDAAANTLSIAAPNRFKLDWVKSQFSGRISDLARDFWNAPIEVQFVLDPKAGQRSPAGATPLAPRAPLPSANPAPVGPGPACAPAVDAHAPAPAGMNAATAAAVAAAQAAQAAQANAAALNADEAADLDLPSLTAHEAAAGRRTWRPGAANANSEAADSMYERSKLNPVLTFDNFVTGKANQLARAAAIQVADNPGISYNPLFLYGGVGLGKTHLIHAIGNQLLLDKPGARIRYIHAEQYVSDVVKAYQRKAFDDFKRYYHSLDLLLIDDIQFFSGKSRTQEEFFYAFEALVANKAQVIITSDTYPKEISGIDDRLISRFDSGLTVAIEPPELEMRVAILMRKAQSEGVSLSEDVAFFVAKHLRSNVRELEGALRKILAYSKFHGREITIELTKEALKDLLTVQNRQISVENIQKTVADFYNIKVADMYSKKRPANIARPRQIAMYLAKELTQKSLPEIGELFGGRDHTTVLHAVRKIADERGKDAQLNHELHVLEQTLKG.

A domain I, interacts with DnaA modulators region spans residues methionine 1–proline 72. The tract at residues proline 72–serine 196 is domain II. Residues alanine 83–proline 110 form a disordered region. Pro residues predominate over residues proline 96–proline 110. The segment at lysine 197–serine 413 is domain III, AAA+ region. 4 residues coordinate ATP: glycine 241, glycine 243, lysine 244, and threonine 245. The tract at residues lysine 414–glycine 533 is domain IV, binds dsDNA.

This sequence belongs to the DnaA family. In terms of assembly, oligomerizes as a right-handed, spiral filament on DNA at oriC.

The protein resides in the cytoplasm. In terms of biological role, plays an essential role in the initiation and regulation of chromosomal replication. ATP-DnaA binds to the origin of replication (oriC) to initiate formation of the DNA replication initiation complex once per cell cycle. Binds the DnaA box (a 9 base pair repeat at the origin) and separates the double-stranded (ds)DNA. Forms a right-handed helical filament on oriC DNA; dsDNA binds to the exterior of the filament while single-stranded (ss)DNA is stabiized in the filament's interior. The ATP-DnaA-oriC complex binds and stabilizes one strand of the AT-rich DNA unwinding element (DUE), permitting loading of DNA polymerase. After initiation quickly degrades to an ADP-DnaA complex that is not apt for DNA replication. Binds acidic phospholipids. In Burkholderia mallei (strain NCTC 10247), this protein is Chromosomal replication initiator protein DnaA.